The following is a 907-amino-acid chain: Protein translocase subunit SecA (907 aa).

ATP contacts are provided by residues Gln87, Gly105 to Thr109, and Asp512. Positions 891, 893, 902, and 903 each coordinate Zn(2+).

The protein belongs to the SecA family. In terms of assembly, monomer and homodimer. Part of the essential Sec protein translocation apparatus which comprises SecA, SecYEG and auxiliary proteins SecDF-YajC and YidC. Zn(2+) serves as cofactor.

It localises to the cell inner membrane. It is found in the cytoplasm. It carries out the reaction ATP + H2O + cellular proteinSide 1 = ADP + phosphate + cellular proteinSide 2.. Its function is as follows. Part of the Sec protein translocase complex. Interacts with the SecYEG preprotein conducting channel. Has a central role in coupling the hydrolysis of ATP to the transfer of proteins into and across the cell membrane, serving both as a receptor for the preprotein-SecB complex and as an ATP-driven molecular motor driving the stepwise translocation of polypeptide chains across the membrane. In Tolumonas auensis (strain DSM 9187 / NBRC 110442 / TA 4), this protein is Protein translocase subunit SecA.